The following is a 352-amino-acid chain: Photosystem II protein D1 (352 aa).

Threonine 2 is modified (N-acetylthreonine). Residue threonine 2 is modified to Phosphothreonine. Helical transmembrane passes span 29 to 46 (YIGW…TATS), 118 to 133 (HFFL…EWEL), and 142 to 156 (WIAV…AATA). Histidine 118 provides a ligand contact to chlorophyll a. Tyrosine 126 is a binding site for pheophytin a. [CaMn4O5] cluster is bound by residues aspartate 170 and glutamate 189. The helical transmembrane segment at 197–218 (FHMLGVAGVFGGSLFSAMHGSL) threads the bilayer. Residue histidine 198 coordinates chlorophyll a. A quinone contacts are provided by residues histidine 215 and 264 to 265 (SF). Histidine 215 lines the Fe cation pocket. Histidine 272 is a binding site for Fe cation. The helical transmembrane segment at 274-288 (FLAAWPVVGIWFTAL) threads the bilayer. 4 residues coordinate [CaMn4O5] cluster: histidine 332, glutamate 333, aspartate 342, and alanine 344. A propeptide spanning residues 345-352 (SVEAPSIA) is cleaved from the precursor.

It belongs to the reaction center PufL/M/PsbA/D family. PSII is composed of 1 copy each of membrane proteins PsbA, PsbB, PsbC, PsbD, PsbE, PsbF, PsbH, PsbI, PsbJ, PsbK, PsbL, PsbM, PsbT, PsbX, PsbY, PsbZ, Psb30/Ycf12, at least 3 peripheral proteins of the oxygen-evolving complex and a large number of cofactors. It forms dimeric complexes. The D1/D2 heterodimer binds P680, chlorophylls that are the primary electron donor of PSII, and subsequent electron acceptors. It shares a non-heme iron and each subunit binds pheophytin, quinone, additional chlorophylls, carotenoids and lipids. D1 provides most of the ligands for the Mn4-Ca-O5 cluster of the oxygen-evolving complex (OEC). There is also a Cl(-1) ion associated with D1 and D2, which is required for oxygen evolution. The PSII complex binds additional chlorophylls, carotenoids and specific lipids. is required as a cofactor. Post-translationally, tyr-161 forms a radical intermediate that is referred to as redox-active TyrZ, YZ or Y-Z. C-terminally processed by CTPA; processing is essential to allow assembly of the oxygen-evolving complex and thus photosynthetic growth.

It is found in the plastid. The protein localises to the chloroplast thylakoid membrane. It carries out the reaction 2 a plastoquinone + 4 hnu + 2 H2O = 2 a plastoquinol + O2. Functionally, photosystem II (PSII) is a light-driven water:plastoquinone oxidoreductase that uses light energy to abstract electrons from H(2)O, generating O(2) and a proton gradient subsequently used for ATP formation. It consists of a core antenna complex that captures photons, and an electron transfer chain that converts photonic excitation into a charge separation. The D1/D2 (PsbA/PsbD) reaction center heterodimer binds P680, the primary electron donor of PSII as well as several subsequent electron acceptors. The sequence is that of Photosystem II protein D1 from Chlorella ellipsoidea.